The chain runs to 378 residues: Alginate lyase (378 aa).

Positions 1-28 are cleaved as a signal peptide; that stretch reads MQTPKLIRPTLLSMAILSSMAWATGASA. Substrate-binding positions include 67–68, 140–141, and tyrosine 258; these read SK and HT. The disordered stretch occupies residues 359–378; that stretch reads LTKVYDPSHEKGDKGDNDGS. Residues 364-378 are compositionally biased toward basic and acidic residues; that stretch reads DPSHEKGDKGDNDGS.

Belongs to the polysaccharide lyase 5 family.

It is found in the periplasm. It catalyses the reaction Eliminative cleavage of alginate to give oligosaccharides with 4-deoxy-alpha-L-erythro-hex-4-enuronosyl groups at their non-reducing ends and beta-D-mannuronate at their reducing end.. Catalyzes the depolymerization of alginate by cleaving the beta-1,4 glycosidic bond between two adjacent sugar residues via a beta-elimination mechanism. May serve to degrade mislocalized alginate that is trapped in the periplasmic space. In Pseudomonas syringae pv. syringae (strain B728a), this protein is Alginate lyase.